Reading from the N-terminus, the 396-residue chain is L-lactate dehydrogenase (396 aa).

The FMN hydroxy acid dehydrogenase domain occupies 1–380 (MIISAASDYR…SGDSLVQELG (380 aa)). Y24 is a substrate binding site. Residues S106 and Q127 each coordinate FMN. Y129 contributes to the substrate binding site. T155 contributes to the FMN binding site. R164 is a substrate binding site. K251 provides a ligand contact to FMN. The active-site Proton acceptor is H275. Residue R278 participates in substrate binding. 306–330 (DSGIRNGLDVVRMIALGADTVLLGR) lines the FMN pocket.

It belongs to the FMN-dependent alpha-hydroxy acid dehydrogenase family. FMN is required as a cofactor.

Its subcellular location is the cell inner membrane. The enzyme catalyses (S)-lactate + A = pyruvate + AH2. Functionally, catalyzes the conversion of L-lactate to pyruvate. Is coupled to the respiratory chain. The protein is L-lactate dehydrogenase of Salmonella arizonae (strain ATCC BAA-731 / CDC346-86 / RSK2980).